We begin with the raw amino-acid sequence, 626 residues long: Chaperone protein HtpG (626 aa).

The interval methionine 1–arginine 343 is a; substrate-binding. The tract at residues glutamate 344–arginine 558 is b. Positions methionine 559–valine 626 are c.

This sequence belongs to the heat shock protein 90 family. As to quaternary structure, homodimer.

The protein localises to the cytoplasm. Molecular chaperone. Has ATPase activity. The sequence is that of Chaperone protein HtpG from Polaromonas sp. (strain JS666 / ATCC BAA-500).